Here is a 293-residue protein sequence, read N- to C-terminus: Ribosomal protein L11 methyltransferase (293 aa).

4 residues coordinate S-adenosyl-L-methionine: Thr145, Gly166, Asp188, and Asn230.

It belongs to the methyltransferase superfamily. PrmA family.

It localises to the cytoplasm. It carries out the reaction L-lysyl-[protein] + 3 S-adenosyl-L-methionine = N(6),N(6),N(6)-trimethyl-L-lysyl-[protein] + 3 S-adenosyl-L-homocysteine + 3 H(+). In terms of biological role, methylates ribosomal protein L11. The protein is Ribosomal protein L11 methyltransferase of Shewanella woodyi (strain ATCC 51908 / MS32).